We begin with the raw amino-acid sequence, 342 residues long: Lipopolysaccharide heptosyltransferase 1 (342 aa).

ADP-L-glycero-beta-D-manno-heptose is bound by residues Ser-188, Ser-189, Lys-193, Glu-225, Asp-268, Ser-269, Gly-270, and His-273.

The protein belongs to the glycosyltransferase 9 family.

It is found in the cell inner membrane. It catalyses the reaction an alpha-Kdo-(2-&gt;4)-alpha-Kdo-(2-&gt;6)-lipid A + ADP-L-glycero-beta-D-manno-heptose = an L-alpha-D-Hep-(1-&gt;5)-[alpha-Kdo-(2-&gt;4)]-alpha-Kdo-(2-&gt;6)-lipid A + ADP + H(+). The protein operates within bacterial outer membrane biogenesis; LPS core biosynthesis. Glycosyltransferase involved in the biosynthesis of the core oligosaccharide region of lipopolysaccharide (LPS). Catalyzes the addition of the first heptose unit to one 3-deoxy-D-manno-octulosonic acid (Kdo) residue of the Kdo2-lipid A module. The chain is Lipopolysaccharide heptosyltransferase 1 from Campylobacter coli.